The following is a 485-amino-acid chain: Glutamate--tRNA ligase (485 aa).

Positions 12–22 match the 'HIGH' region motif; it reads PSPTGYMHIGN. The short motif at 253 to 257 is the 'KMSKS' region element; the sequence is KLSKR. An ATP-binding site is contributed by K256.

Belongs to the class-I aminoacyl-tRNA synthetase family. Glutamate--tRNA ligase type 1 subfamily. In terms of assembly, monomer.

The protein localises to the cytoplasm. The enzyme catalyses tRNA(Glu) + L-glutamate + ATP = L-glutamyl-tRNA(Glu) + AMP + diphosphate. Functionally, catalyzes the attachment of glutamate to tRNA(Glu) in a two-step reaction: glutamate is first activated by ATP to form Glu-AMP and then transferred to the acceptor end of tRNA(Glu). This Clostridium acetobutylicum (strain ATCC 824 / DSM 792 / JCM 1419 / IAM 19013 / LMG 5710 / NBRC 13948 / NRRL B-527 / VKM B-1787 / 2291 / W) protein is Glutamate--tRNA ligase.